Reading from the N-terminus, the 557-residue chain is Potassium-transporting ATPase potassium-binding subunit (557 aa).

12 helical membrane passes run 5 to 25 (GFLLIATFLLVLMVLARPLGS), 63 to 83 (LSAILGLNILGLAVLFFMLLG), 132 to 152 (GLTVQNFLSAASGIAVIFALI), 170 to 190 (LLRITLWVLAPVALLIALFFI), 253 to 273 (FVQMLAIFLIPTALCFAFGEV), 283 to 303 (LLWAMSVIFVICTGVVMWAEV), 329 to 349 (VLVSSLFAVVTTAASCGAVIA), 356 to 376 (ALGGMVPMWLMQIGEVVFGGV), 379 to 399 (GLYGMMLFVLLAVFIAGLMIG), 416 to 436 (LTALAILVTPTLVLMGAALAM), 484 to 504 (LLALCMFVGRFGVIIPVMAIA), and 526 to 546 (LFVGLLIGTVLLVGALTFIPA).

It belongs to the KdpA family. As to quaternary structure, the system is composed of three essential subunits: KdpA, KdpB and KdpC.

It is found in the cell inner membrane. Part of the high-affinity ATP-driven potassium transport (or Kdp) system, which catalyzes the hydrolysis of ATP coupled with the electrogenic transport of potassium into the cytoplasm. This subunit binds the periplasmic potassium ions and delivers the ions to the membrane domain of KdpB through an intramembrane tunnel. This chain is Potassium-transporting ATPase potassium-binding subunit, found in Escherichia coli O6:H1 (strain CFT073 / ATCC 700928 / UPEC).